A 210-amino-acid polypeptide reads, in one-letter code: Cytochrome c biogenesis ATP-binding export protein CcmA (210 aa).

The region spanning 4–207 (LAVRDLAVAR…RQSRPAGFNE (204 aa)) is the ABC transporter domain. 36–43 (GPNGIGKT) contributes to the ATP binding site.

Belongs to the ABC transporter superfamily. CcmA exporter (TC 3.A.1.107) family. As to quaternary structure, the complex is composed of two ATP-binding proteins (CcmA) and two transmembrane proteins (CcmB).

It localises to the cell inner membrane. The catalysed reaction is heme b(in) + ATP + H2O = heme b(out) + ADP + phosphate + H(+). Functionally, part of the ABC transporter complex CcmAB involved in the biogenesis of c-type cytochromes; once thought to export heme, this seems not to be the case, but its exact role is uncertain. Responsible for energy coupling to the transport system. This Paracoccus denitrificans (strain Pd 1222) protein is Cytochrome c biogenesis ATP-binding export protein CcmA.